The primary structure comprises 336 residues: Peroxidase 72 (336 aa).

Residues 1-23 form the signal peptide; sequence MAKSLNILIAALSLIAFSPFCLC. Intrachain disulfides connect Cys-42–Cys-122, Cys-75–Cys-80, Cys-128–Cys-329, and Cys-207–Cys-239. His-73 (proton acceptor) is an active-site residue. 5 residues coordinate Ca(2+): Asp-74, Val-77, Gly-79, Asp-81, and Ser-83. Pro-170 provides a ligand contact to substrate. N-linked (GlcNAc...) asparagine glycosylation occurs at Asn-173. His-200 lines the heme b pocket. Thr-201 contacts Ca(2+). A glycan (N-linked (GlcNAc...) asparagine) is linked at Asn-216. Residues Asp-252, Thr-255, and Asp-260 each coordinate Ca(2+).

It belongs to the peroxidase family. Classical plant (class III) peroxidase subfamily. It depends on heme b as a cofactor. Ca(2+) is required as a cofactor. Slightly expressed in roots.

It is found in the secreted. It carries out the reaction 2 a phenolic donor + H2O2 = 2 a phenolic radical donor + 2 H2O. Removal of H(2)O(2), oxidation of toxic reductants, biosynthesis and degradation of lignin, suberization, auxin catabolism, response to environmental stresses such as wounding, pathogen attack and oxidative stress. These functions might be dependent on each isozyme/isoform in each plant tissue. This chain is Peroxidase 72 (PER72), found in Arabidopsis thaliana (Mouse-ear cress).